The primary structure comprises 102 residues: Acid shock protein (102 aa).

The signal sequence occupies residues 1–21 (MKKVLGLVVAAAMGLSSAAFA). Low complexity predominate over residues 22-41 (AETATTPAPTATTTKAAPAK). Residues 22–58 (AETATTPAPTATTTKAAPAKTTHHKKQHKAAPAQKAQ) constitute a propeptide that is removed on maturation. The interval 22–102 (AETATTPAPT…PAKPAAQPAA (81 aa)) is disordered. Positions 80–90 (AAKKHAGKHSH) are enriched in basic residues. The span at 91-102 (QQPAKPAAQPAA) shows a compositional bias: low complexity.

It belongs to the Asr family. Proteolytic processing gives rise to the active protein.

It is found in the periplasm. Its function is as follows. Required for growth and/or survival at acidic conditions. The sequence is that of Acid shock protein from Escherichia coli (strain SE11).